A 327-amino-acid chain; its full sequence is GTPase Obg (327 aa).

The Obg domain maps to 1–159 (MKFLDQVKIY…YVIWLQLKTI (159 aa)). In terms of domain architecture, OBG-type G spans 160 to 327 (ADVGIVGLPN…IKAKLLSYVS (168 aa)). Residues 166–173 (GLPNAGKS), 191–195 (FTTLN), 212–215 (DIPG), 279–282 (NKTD), and 308–310 (STL) contribute to the GTP site. 2 residues coordinate Mg(2+): Ser173 and Thr193.

It belongs to the TRAFAC class OBG-HflX-like GTPase superfamily. OBG GTPase family. As to quaternary structure, monomer. Mg(2+) serves as cofactor.

The protein resides in the cytoplasm. An essential GTPase which binds GTP, GDP and possibly (p)ppGpp with moderate affinity, with high nucleotide exchange rates and a fairly low GTP hydrolysis rate. Plays a role in control of the cell cycle, stress response, ribosome biogenesis and in those bacteria that undergo differentiation, in morphogenesis control. The sequence is that of GTPase Obg from Pelagibacter ubique (strain HTCC1062).